A 288-amino-acid chain; its full sequence is Ankyrin repeat and SOCS box protein 8 (288 aa).

Ser-17 is modified (phosphoserine). 4 ANK repeats span residues 52–81, 85–113, 117–146, and 150–179; these read GTLK…EVNA, YNRT…NPNA, NRDT…SVNA, and NNDT…EVRV. Residues 235–288 enclose the SOCS box domain; it reads QLCEKLTVLCSAPGTLKTLARYTVRRSLGLQYLPDAVKGLPLPASLKEYLLLLE.

Belongs to the ankyrin SOCS box (ASB) family. In terms of assembly, interacts with TBK1; this interaction promotes TBK1 proteasomal degradation. Phosphorylated by TBK1.

It localises to the cytoplasm. The protein operates within protein modification; protein ubiquitination. May be a substrate-recognition component of a SCF-like ECS (Elongin-Cullin-SOCS-box protein) E3 ubiquitin-protein ligase complex which mediates the ubiquitination and subsequent proteasomal degradation of target proteins. Inhibits IFN-beta production through the IRF3 signaling pathway by targeting TBK1 via 'Lys-48'-linked ubiquitination, leading to its proteasomal degradation. This Pongo abelii (Sumatran orangutan) protein is Ankyrin repeat and SOCS box protein 8 (ASB8).